A 205-amino-acid polypeptide reads, in one-letter code: uncharacterized protein (205 aa).

Transmembrane regions (helical) follow at residues 4 to 24, 105 to 125, 130 to 150, 151 to 171, and 182 to 202; these read LAFLILLIVFSNLSLVNAIDD, KWFIAISILILGIILATLWIL, FLLFLAIFGLIVPFLQFKIPN, WLFNILALPLFVYIKFIVPEC, and ITIPISMYGWILIGLAVKFII.

It localises to the cell membrane. This is an uncharacterized protein from Methanocaldococcus jannaschii (strain ATCC 43067 / DSM 2661 / JAL-1 / JCM 10045 / NBRC 100440) (Methanococcus jannaschii).